The primary structure comprises 136 residues: Small ribosomal subunit protein uS19 (136 aa).

Residues 117–136 (VQHGDPGMGATRSSMFVPLK) form a disordered region.

Belongs to the universal ribosomal protein uS19 family.

Protein S19 forms a complex with S13 that binds strongly to the 16S ribosomal RNA. The polypeptide is Small ribosomal subunit protein uS19 (Methanobrevibacter smithii (strain ATCC 35061 / DSM 861 / OCM 144 / PS)).